The following is a 139-amino-acid chain: Immunogenic miracidial antigen 8I' (139 aa).

Positions 61–139 (IDVGDEDYHD…PKKYGSGYKH (79 aa)) are disordered. Residues 64–85 (GDEDYHDGDDDVDYTDDVDDVD) show a composition bias toward acidic residues. Residues 90-103 (SPSQLLQGGYQRNQ) are compositionally biased toward polar residues.

The protein belongs to the immunogenic miracidial antigen family.

In Schistosoma japonicum (Blood fluke), this protein is Immunogenic miracidial antigen 8I' (8I').